A 484-amino-acid polypeptide reads, in one-letter code: Hexokinase-1 (484 aa).

The Hexokinase domain occupies 25 to 465; that stretch reads KTLQDHLDEL…SGVGAALVSA (441 aa). Residues 79–212 form a hexokinase small subdomain region; the sequence is DGNEHGSYLA…CNNVRLNAIL (134 aa). Residue 90 to 95 participates in ATP binding; sequence DLGGTN. Substrate is bound by residues 160-161, 177-178, and 213-214; these read SY, TK, and SD. The hexokinase large subdomain stretch occupies residues 213 to 454; that stretch reads SDTTGTLVAS…SKVVTIPAED (242 aa). An ATP-binding site is contributed by Thr237. Residues Asn240, Glu269, and Glu302 each contribute to the substrate site. ATP-binding positions include 307 to 308, 344 to 348, and 419 to 423; these read GC, TSVLS, and SVYNL.

The protein belongs to the hexokinase family. In terms of assembly, monomer.

It catalyses the reaction a D-hexose + ATP = a D-hexose 6-phosphate + ADP + H(+). The enzyme catalyses D-mannose + ATP = D-mannose 6-phosphate + ADP + H(+). The catalysed reaction is D-fructose + ATP = D-fructose 6-phosphate + ADP + H(+). It carries out the reaction D-glucose + ATP = D-glucose 6-phosphate + ADP + H(+). It participates in carbohydrate metabolism; hexose metabolism. Its pathway is carbohydrate degradation; glycolysis; D-glyceraldehyde 3-phosphate and glycerone phosphate from D-glucose: step 1/4. In terms of biological role, catalyzes the phosphorylation of hexose (six-carbon sugars) to hexose 6-phosphate. Phosphorylates D-fructose, D-mannose and, to a lower extent, D-glucose. Compared to hxk2, has low affinity for D-glucose. The protein is Hexokinase-1 of Schizosaccharomyces pombe (strain 972 / ATCC 24843) (Fission yeast).